The following is a 2374-amino-acid chain: Genome polyprotein (2374 aa).

A lipid anchor (N-myristoyl glycine; by host) is attached at glycine 115. 2 disordered regions span residues glycine 144–valine 176 and glycine 707–proline 739. Positions glycine 157–asparagine 174 are enriched in low complexity. Residues alanine 716 to threonine 728 are compositionally biased toward polar residues. In terms of domain architecture, SF3 helicase spans tyrosine 1361–glutamine 1525. Glycine 1387–serine 1394 is an ATP binding site. Glycine 1600 is lipidated: N-myristoyl glycine; by host. The helical transmembrane segment at isoleucine 1649–leucine 1669 threads the bilayer. The tract at residues glycine 1677–serine 1699 is disordered. The residue at position 1679 (tyrosine 1679) is an O-(5'-phospho-RNA)-tyrosine. Positions glycine 1700 to valine 1889 constitute a Peptidase C3 domain. Active-site for protease 3C activity residues include histidine 1748, glutamate 1779, and cysteine 1852. Residues serine 2126–glutamate 2243 enclose the RdRp catalytic domain. Residues aspartate 2132 and aspartate 2229 each act as for RdRp activity in the active site.

Interacts with capsid protein VP1. Interacts with capsid protein VP3. As to quaternary structure, interacts with capsid protein VP0. Interacts with capsid protein VP3. In terms of assembly, interacts with capsid protein VP0. Interacts with capsid protein VP1. Homodimer. Interacts with protein 2B. Interacts with protein 2C. As to quaternary structure, homodimer. Interacts with host ABCD3. Interacts with protein 2A. Interacts with host ACBD3. In terms of assembly, homodimer. Interacts with host ABCD3. Interacts with protein 2A. Interacts with protein 3A. Interacts with protein 3C. Interacts with host ACBD3. Homodimer. Interacts with host ABCD3 (via GOLD domain) and PI4KB; these interactions allow the formation of a viral protein/ACBD3/PI4KB complex in order to synthesize PI4P at the viral RNA replication sites. Interacts with protein 2C. Interacts with protein 3C. Protein 3C: Interacts with protein 2A. Protein 3C: Interacts with protein 2C. Post-translationally, specific enzymatic cleavages by the viral protease in vivo yield a variety of precursors and mature proteins. The leader protein-VP0 junction is cleaved by 3C proteinase. The VP1/2A junction is cleaved by the protein 3CD in association with protein 2A. In terms of processing, uridylylated by the polymerase and is covalently linked to the 5'-end of genomic RNA. This uridylylated form acts as a nucleotide-peptide primer for the polymerase.

It localises to the virion. The protein localises to the host cytoplasm. The protein resides in the host cytoplasmic vesicle membrane. Its subcellular location is the host Golgi apparatus membrane. The enzyme catalyses Selective cleavage of Gln-|-Gly bond in the poliovirus polyprotein. In other picornavirus reactions Glu may be substituted for Gln, and Ser or Thr for Gly.. It carries out the reaction RNA(n) + a ribonucleoside 5'-triphosphate = RNA(n+1) + diphosphate. It catalyses the reaction ATP + H2O = ADP + phosphate + H(+). Its function is as follows. Required for viral RNA replication and viral RNA encapsidation. Does not have any proteolytic activity. Forms an icosahedral capsid of pseudo T=3 symmetry with capsid proteins VP0 and VP3. Together they form an icosahedral capsid composed of 60 copies of each VP0, VP1, and VP3. All the three latter proteins contain a beta-sheet structure called beta-barrel jelly roll. Functionally, forms an icosahedral capsid of pseudo T=3 symmetry with capsid proteins VP1 and VP3. Together they form an icosahedral capsid composed of 60 copies of each VP0, VP1, and VP3. All the three latter proteins contain a beta-sheet structure called beta-barrel jelly roll. In terms of biological role, forms an icosahedral capsid of pseudo T=3 symmetry with capsid proteins VP0 and VP1. Together they form an icosahedral capsid composed of 60 copies of each VP0, VP1, and VP3. All the three latter proteins contain a beta-sheet structure called beta-barrel jelly roll. Its function is as follows. Required for viral RNA replication. Does not have any proteolytic activity. Affects membrane integrity and causes an increase in membrane permeability. Functionally, induces and associates with structural rearrangements of intracellular membranes. Displays RNA-binding, nucleotide binding and NTPase activities. May play a role in virion morphogenesis and viral RNA encapsidation by interacting with the capsid protein VP3. In terms of biological role, serves as membrane anchor via its hydrophobic domain. Plays an essential role in viral RNA replication by recruiting PI4KB at the viral replication sites, thereby allowing the formation of rearranged membranous structures where viral replication takes place. Its function is as follows. Forms a primer, VPg-pU, which is utilized by the polymerase for the initiation of RNA chains. Cysteine protease that generates mature viral proteins from the precursor polyprotein. In addition to its proteolytic activity, it binds to viral RNA, and thus influences viral genome replication. RNA and substrate cooperatively bind to the protease. Functionally, replicates the genomic and antigenomic RNAs by recognizing replications specific signals. Performs VPg uridylylation. The protein is Genome polyprotein of Salivirus A (isolate Human/Nigeria/NG-J1/2007) (SV-A).